The chain runs to 100 residues: UPF0125 protein HD_1828 (100 aa).

This sequence belongs to the UPF0125 (RnfH) family.

In Haemophilus ducreyi (strain 35000HP / ATCC 700724), this protein is UPF0125 protein HD_1828.